The primary structure comprises 432 residues: Adenylosuccinate synthetase (432 aa).

GTP is bound by residues 13–19 (GDEGKGK) and 41–43 (GHT). D14 acts as the Proton acceptor in catalysis. Residues D14 and G41 each coordinate Mg(2+). Residues 14 to 17 (DEGK), 39 to 42 (NAGH), T130, R144, Q225, T240, and R304 each bind IMP. The Proton donor role is filled by H42. Residue 300–306 (ATTGRKR) coordinates substrate. Residues R306, 332 to 334 (KLD), and 415 to 417 (STG) contribute to the GTP site.

This sequence belongs to the adenylosuccinate synthetase family. In terms of assembly, homodimer. Requires Mg(2+) as cofactor.

Its subcellular location is the cytoplasm. It catalyses the reaction IMP + L-aspartate + GTP = N(6)-(1,2-dicarboxyethyl)-AMP + GDP + phosphate + 2 H(+). Its pathway is purine metabolism; AMP biosynthesis via de novo pathway; AMP from IMP: step 1/2. In terms of biological role, plays an important role in the de novo pathway of purine nucleotide biosynthesis. Catalyzes the first committed step in the biosynthesis of AMP from IMP. In Tolumonas auensis (strain DSM 9187 / NBRC 110442 / TA 4), this protein is Adenylosuccinate synthetase.